Here is a 426-residue protein sequence, read N- to C-terminus: uncharacterized protein (426 aa).

Residue His-277 coordinates Zn(2+). The active site involves Glu-278. 2 residues coordinate Zn(2+): His-281 and Glu-357.

Belongs to the peptidase M48B family. The cofactor is Zn(2+).

This is an uncharacterized protein from Bacillus subtilis (strain 168).